A 78-amino-acid chain; its full sequence is Conotoxin ArMKLT2-0313 (78 aa).

Residues 1-22 (MKLTCVLIIAVLCLTVCQLITA) form the signal peptide. Positions 23–47 (DYLRDKQKYRSVRLRDGMLNFKGSR) are excised as a propeptide. Gln48 is subject to Pyrrolidone carboxylic acid. Disulfide bonds link Cys49–Cys62, Cys56–Cys67, and Cys61–Cys75.

The protein belongs to the conotoxin O1 superfamily. As to expression, expressed by the venom duct.

It localises to the secreted. This is Conotoxin ArMKLT2-0313 from Conus arenatus (Sand-dusted cone).